A 604-amino-acid chain; its full sequence is Glutamine--fructose-6-phosphate aminotransferase [isomerizing] (604 aa).

Cys2 acts as the Nucleophile; for GATase activity in catalysis. Positions 2–219 constitute a Glutamine amidotransferase type-2 domain; the sequence is CGIMGAVSER…EGDSACVTTQ (218 aa). 2 consecutive SIS domains span residues 279–427 and 454–594; these read LRAS…DNRA and LASL…VDQP. Lys599 serves as the catalytic For Fru-6P isomerization activity.

As to quaternary structure, homodimer.

It localises to the cytoplasm. The enzyme catalyses D-fructose 6-phosphate + L-glutamine = D-glucosamine 6-phosphate + L-glutamate. Functionally, catalyzes the first step in hexosamine metabolism, converting fructose-6P into glucosamine-6P using glutamine as a nitrogen source. This Legionella pneumophila (strain Lens) protein is Glutamine--fructose-6-phosphate aminotransferase [isomerizing].